Here is an 845-residue protein sequence, read N- to C-terminus: BLOC-2 complex member HPS5 homolog (845 aa).

Residues 239-268 (PTEEDLEDAKSMEGSDDNDNDQRSSPSGVK) form a disordered region.

This sequence belongs to the HPS5 family.

Its function is as follows. Has a role in the biogenesis of eye pigment granules. Eye pigment granules are specialized forms of late endosomes or lysosomes. Biogenesis of pigment granules in the eye requires molecular components required for protein delivery to lysosomes. In Aedes aegypti (Yellowfever mosquito), this protein is BLOC-2 complex member HPS5 homolog.